Here is a 984-residue protein sequence, read N- to C-terminus: Valine--tRNA ligase (984 aa).

Positions 65 to 75 match the 'HIGH' region motif; sequence PNVTGSLHMGH. A 'KMSKS' region motif is present at residues 579–583; the sequence is KMSKS. Lysine 582 serves as a coordination point for ATP. The stretch at 954–984 forms a coiled coil; sequence VEVVDAEKAKLAELEGQLTAMTAQMEELKNL.

This sequence belongs to the class-I aminoacyl-tRNA synthetase family. ValS type 1 subfamily. As to quaternary structure, monomer.

It is found in the cytoplasm. The catalysed reaction is tRNA(Val) + L-valine + ATP = L-valyl-tRNA(Val) + AMP + diphosphate. In terms of biological role, catalyzes the attachment of valine to tRNA(Val). As ValRS can inadvertently accommodate and process structurally similar amino acids such as threonine, to avoid such errors, it has a 'posttransfer' editing activity that hydrolyzes mischarged Thr-tRNA(Val) in a tRNA-dependent manner. The sequence is that of Valine--tRNA ligase from Psychrobacter arcticus (strain DSM 17307 / VKM B-2377 / 273-4).